We begin with the raw amino-acid sequence, 152 residues long: Cytochrome c-type biogenesis CcmH-like mitochondrial protein (152 aa).

The Mitochondrial intermembrane segment spans residues 1 to 83; it reads MATEEDVKQR…ILYTPKFDLQ (83 aa). Residues Cys-26 and Cys-29 each contribute to the heme site. A helical membrane pass occupies residues 84-104; it reads TAAIWLSPVIVGGVAAGVWAY. At 105-152 the chain is on the mitochondrial matrix side; sequence QKHRQRTNVHIMALNLVRGVPLTPREKETMLDVLTPPPPANKWWWPGK.

Belongs to the CcmH/CycL/Ccl2/NrfF family.

It is found in the mitochondrion inner membrane. In terms of biological role, plays a role in mitochondrial cytochrome c maturation. Probable component of a heme lyase complex involved in the reduction of apocytochrome c. This is Cytochrome c-type biogenesis CcmH-like mitochondrial protein from Oryza sativa subsp. japonica (Rice).